Here is a 1041-residue protein sequence, read N- to C-terminus: Beta-galactosidase (1041 aa).

Positions 103 and 201 each coordinate substrate. Asp-201 provides a ligand contact to Na(+). Mg(2+) contacts are provided by Glu-415, His-417, and Glu-460. Residues Glu-460 and 536-539 contribute to the substrate site; that span reads EYAH. The Proton donor role is filled by Glu-460. The active-site Nucleophile is Glu-536. Mg(2+) is bound at residue Asn-596. The Na(+) site is built by Phe-600 and Asn-603. 2 residues coordinate substrate: Asn-603 and Trp-1016.

It belongs to the glycosyl hydrolase 2 family. In terms of assembly, homotetramer. The cofactor is Mg(2+). Requires Na(+) as cofactor.

It catalyses the reaction Hydrolysis of terminal non-reducing beta-D-galactose residues in beta-D-galactosides.. This Alteromonas mediterranea (strain DSM 17117 / CIP 110805 / LMG 28347 / Deep ecotype) protein is Beta-galactosidase.